The chain runs to 1432 residues: Probable ATP-dependent RNA helicase spindle-E (1432 aa).

The Helicase ATP-binding domain maps to 124-291 (LAAINAHPVV…FTTTNSVPPV (168 aa)). 137–144 (GQTGCGKT) contacts ATP. The DEAH box signature appears at 237-240 (DEVH). The Helicase C-terminal domain maps to 337 to 524 (KIIMVIDNME…NSVLRAKELE (188 aa)). The 64-residue stretch at 936-999 (AGAITKGMMV…RLMPKELIQQ (64 aa)) folds into the Tudor domain.

The protein belongs to the DEAD box helicase family. DEAH subfamily.

The protein resides in the cytoplasm. The enzyme catalyses ATP + H2O = ADP + phosphate + H(+). Functionally, probable ATP-binding RNA helicase which plays a central role during spermatogenesis and oogenesis by repressing transposable elements and preventing their mobilization, which is essential for the germline integrity. Acts via the piRNA metabolic process, which mediates the repression of transposable elements during meiosis by forming complexes composed of piRNAs and Piwi and govern the methylation and subsequent repression of transposons. Involved in the repression of LTR retrotransposon copia. Also involved in telomere regulation by repressing specialized telomeric retroelements HeT-A, TAHRE, and TART; Drosophila telomeres being maintained by transposition of specialized telomeric retroelements. Involved in telomeric trans-silencing, a repression mechanism by which a transposon or a transgene inserted in subtelomeric heterochromatin has the capacity to repress in trans in the female germline, a homologous transposon, or transgene located in euchromatin. Involved in the repression of testis-expressed Stellate genes by the homologous Su(Ste) repeats. Required for anteroposterior and dorsoventral axis formation during oogenesis. The chain is Probable ATP-dependent RNA helicase spindle-E (spn-E) from Drosophila erecta (Fruit fly).